Here is a 525-residue protein sequence, read N- to C-terminus: GMP synthase [glutamine-hydrolyzing] (525 aa).

The 190-residue stretch at 16-205 (PVLVVDFGAQ…LHDFAGLGAD (190 aa)) folds into the Glutamine amidotransferase type-1 domain. Cys-93 functions as the Nucleophile in the catalytic mechanism. Catalysis depends on residues His-179 and Glu-181. The GMPS ATP-PPase domain occupies 206-399 (WTAANIAGVL…LGLPEEIVAR (194 aa)). An ATP-binding site is contributed by 233 to 239 (SGGVDSA).

As to quaternary structure, homodimer.

The enzyme catalyses XMP + L-glutamine + ATP + H2O = GMP + L-glutamate + AMP + diphosphate + 2 H(+). Its pathway is purine metabolism; GMP biosynthesis; GMP from XMP (L-Gln route): step 1/1. Functionally, catalyzes the synthesis of GMP from XMP. The sequence is that of GMP synthase [glutamine-hydrolyzing] from Mycolicibacterium paratuberculosis (strain ATCC BAA-968 / K-10) (Mycobacterium paratuberculosis).